Reading from the N-terminus, the 455-residue chain is uncharacterized protein (455 aa).

The next 12 helical transmembrane spans lie at 19–39 (FSLF…MFMG), 63–83 (ILNL…VIIS), 106–126 (FFIS…LLHM), 140–160 (FLQV…FSAI), 173–195 (VTIG…LFGF), 200–222 (VAGV…IVIV), 265–285 (MIVT…KVYT), 288–308 (ITMF…ILIG), 324–344 (MKSL…MTIF), 348–368 (LIGL…LIAM), 388–408 (AAGD…GIGL), and 410–430 (LAYL…ISFI).

The protein belongs to the multi antimicrobial extrusion (MATE) (TC 2.A.66.1) family.

The protein resides in the cell membrane. This is an uncharacterized protein from Bacillus subtilis (strain 168).